We begin with the raw amino-acid sequence, 278 residues long: Orotidine 5'-phosphate decarboxylase (278 aa).

Residues Asp40, 65–67, 96–105, Tyr230, and Arg248 contribute to the substrate site; these read KTH and DRKFIDIGNT. The active-site Proton donor is Lys98.

Belongs to the OMP decarboxylase family.

The catalysed reaction is orotidine 5'-phosphate + H(+) = UMP + CO2. It participates in pyrimidine metabolism; UMP biosynthesis via de novo pathway; UMP from orotate: step 2/2. The protein is Orotidine 5'-phosphate decarboxylase (pyrG) of Penicillium chrysogenum (Penicillium notatum).